The following is a 420-amino-acid chain: Histidine--tRNA ligase (420 aa).

It belongs to the class-II aminoacyl-tRNA synthetase family. Homodimer.

Its subcellular location is the cytoplasm. It catalyses the reaction tRNA(His) + L-histidine + ATP = L-histidyl-tRNA(His) + AMP + diphosphate + H(+). The chain is Histidine--tRNA ligase from Macrococcus caseolyticus (strain JCSC5402) (Macrococcoides caseolyticum).